A 245-amino-acid chain; its full sequence is UDP-2,3-diacylglucosamine hydrolase (245 aa).

Residues aspartate 8, histidine 10, aspartate 41, asparagine 79, and histidine 114 each contribute to the Mn(2+) site. 79-80 contributes to the substrate binding site; it reads NR. Substrate is bound by residues aspartate 122, serine 160, asparagine 164, lysine 167, and histidine 195. Mn(2+) contacts are provided by histidine 195 and histidine 197.

It belongs to the LpxH family. The cofactor is Mn(2+).

It is found in the cell inner membrane. It carries out the reaction UDP-2-N,3-O-bis[(3R)-3-hydroxytetradecanoyl]-alpha-D-glucosamine + H2O = 2-N,3-O-bis[(3R)-3-hydroxytetradecanoyl]-alpha-D-glucosaminyl 1-phosphate + UMP + 2 H(+). Its pathway is glycolipid biosynthesis; lipid IV(A) biosynthesis; lipid IV(A) from (3R)-3-hydroxytetradecanoyl-[acyl-carrier-protein] and UDP-N-acetyl-alpha-D-glucosamine: step 4/6. In terms of biological role, hydrolyzes the pyrophosphate bond of UDP-2,3-diacylglucosamine to yield 2,3-diacylglucosamine 1-phosphate (lipid X) and UMP by catalyzing the attack of water at the alpha-P atom. Involved in the biosynthesis of lipid A, a phosphorylated glycolipid that anchors the lipopolysaccharide to the outer membrane of the cell. The sequence is that of UDP-2,3-diacylglucosamine hydrolase from Photobacterium profundum (strain SS9).